We begin with the raw amino-acid sequence, 350 residues long: Bifunctional methylenetetrahydrofolate dehydrogenase/cyclohydrolase, mitochondrial (350 aa).

Residues M1–N35 constitute a mitochondrion transit peptide. K50 is subject to N6-acetyllysine; alternate. Residue K50 forms a Glycyl lysine isopeptide (Lys-Gly) (interchain with G-Cter in SUMO2); alternate linkage. Residues Y84–K88 and V131–L133 each bind substrate. Residues G200 to S202 and R233 contribute to the NAD(+) site. Substrate is bound at residue P309 to G313.

The protein belongs to the tetrahydrofolate dehydrogenase/cyclohydrolase family. Homodimer. Mg(2+) is required as a cofactor.

Its subcellular location is the mitochondrion. It catalyses the reaction (6R)-5,10-methylene-5,6,7,8-tetrahydrofolate + NAD(+) = (6R)-5,10-methenyltetrahydrofolate + NADH. It carries out the reaction (6R)-5,10-methenyltetrahydrofolate + H2O = (6R)-10-formyltetrahydrofolate + H(+). Although its dehydrogenase activity is NAD-specific, it can also utilize NADP at a reduced efficiency. This Mus musculus (Mouse) protein is Bifunctional methylenetetrahydrofolate dehydrogenase/cyclohydrolase, mitochondrial (Mthfd2).